The sequence spans 332 residues: Glyceraldehyde-3-phosphate dehydrogenase 1 (332 aa).

Residues 11 to 12 (RI), Asp32, and Arg77 each bind NAD(+). D-glyceraldehyde 3-phosphate-binding positions include 148 to 150 (SCT), Thr179, 208 to 209 (TG), and Arg231. Residue Cys149 is the Nucleophile of the active site. Residue Asn313 coordinates NAD(+).

It belongs to the glyceraldehyde-3-phosphate dehydrogenase family. Homotetramer.

The protein resides in the cytoplasm. The enzyme catalyses D-glyceraldehyde 3-phosphate + phosphate + NAD(+) = (2R)-3-phospho-glyceroyl phosphate + NADH + H(+). The protein operates within carbohydrate degradation; glycolysis; pyruvate from D-glyceraldehyde 3-phosphate: step 1/5. The polypeptide is Glyceraldehyde-3-phosphate dehydrogenase 1 (Gapdh1) (Drosophila melanogaster (Fruit fly)).